A 391-amino-acid polypeptide reads, in one-letter code: Ferrochelatase (391 aa).

Fe cation is bound by residues His-196 and Glu-281.

Belongs to the ferrochelatase family.

The protein localises to the cytoplasm. It catalyses the reaction heme b + 2 H(+) = protoporphyrin IX + Fe(2+). Its pathway is porphyrin-containing compound metabolism; protoheme biosynthesis; protoheme from protoporphyrin-IX: step 1/1. Functionally, catalyzes the ferrous insertion into protoporphyrin IX. The protein is Ferrochelatase of Prochlorococcus marinus (strain NATL2A).